The chain runs to 815 residues: Protein pygopus (815 aa).

Disordered stretches follow at residues 1 to 107 (MTHN…QVSA) and 147 to 711 (GMGG…GPMG). Positions 39-45 (PKKRRKT) match the Nuclear localization signal motif. The span at 46 to 73 (SSAANSAAAVAAAAAAAAAANSMQQQQA) shows a compositional bias: low complexity. Pro residues predominate over residues 74–86 (PPTPQDLLPPPPM). Over residues 188–199 (RGMSPMHPHQMG) the composition is skewed to low complexity. 2 stretches are compositionally biased toward gly residues: residues 230–248 (PMGG…GMGG) and 257–269 (GMGG…GGPN). Positions 307 to 316 (LGPPSGPGPG) are enriched in pro residues. 4 stretches are compositionally biased toward low complexity: residues 323–341 (GPQQ…NGQM), 407–424 (SNNN…NQNP), 444–478 (PSVS…VPTS), and 495–545 (GPSP…HQQH). Positions 569-580 (PQQPSHLGPPHP) are enriched in pro residues. A compositionally biased stretch (gly residues) spans 602–621 (GGPGMHGGPAGMPPHMGGGP). Residues 622–636 (NPHMMGGPHGNAGPH) are compositionally biased toward low complexity. The span at 640 to 656 (GHMGGVPGPGPGPGGMN) shows a compositional bias: gly residues. Positions 663-675 (MSPHHGHPHHHHN) are enriched in basic residues. A compositionally biased stretch (gly residues) spans 678-711 (GGPGPNMFGGGGGGPMGPGGPMGNMGPMGGGPMG). The segment at 747–805 (IYPCGMCHKEVNDNDEAVFCESGCNFFFHRTCVGLTEAAFQMLNKEVFAEWCCDKCVSS) adopts a PHD-type zinc-finger fold.

In terms of assembly, binds to BCL9 via the PHD-type zinc finger motif, and thereby becomes part of the nuclear ARM/PAN complex. As to expression, ubiquitous throughout embryogenesis and larval development.

It localises to the nucleus. In terms of biological role, involved in signal transduction through the Wnt pathway. In Drosophila melanogaster (Fruit fly), this protein is Protein pygopus (pygo).